Reading from the N-terminus, the 94-residue chain is Co-chaperonin GroES (94 aa).

Belongs to the GroES chaperonin family. Heptamer of 7 subunits arranged in a ring. Interacts with the chaperonin GroEL.

The protein localises to the cytoplasm. Together with the chaperonin GroEL, plays an essential role in assisting protein folding. The GroEL-GroES system forms a nano-cage that allows encapsulation of the non-native substrate proteins and provides a physical environment optimized to promote and accelerate protein folding. GroES binds to the apical surface of the GroEL ring, thereby capping the opening of the GroEL channel. The sequence is that of Co-chaperonin GroES from Bacillus subtilis (strain 168).